Reading from the N-terminus, the 1873-residue chain is Voltage-dependent L-type calcium channel subunit alpha-1S (1873 aa).

The tract at residues 1-23 (MEPSSPQDEGLRKKQPKKPLPEV) is disordered. At 1–51 (MEPSSPQDEGLRKKQPKKPLPEVLPRPPRALFCLTLQNPLRKACISIVEWK) the chain is on the cytoplasmic side. An I repeat occupies 38–337 (NPLRKACISI…LVLGVLSGEF (300 aa)). The helical transmembrane segment at 52–70 (PFETIILLTIFANCVALAV) threads the bilayer. Residues 71 to 85 (YLPMPEDDNNSLNLG) lie on the Extracellular side of the membrane. Asn79 carries N-linked (GlcNAc...) asparagine glycosylation. A helical membrane pass occupies residues 86 to 106 (LEKLEYFFLTVFSIEAAMKII). Topologically, residues 107-115 (AYGFLFHQD) are cytoplasmic. The chain crosses the membrane as a helical span at residues 116–136 (AYLRSGWNVLDFIIVFLGVFT). Residues 137-160 (AILEQVNVIQSNTAPMSSKGAGLD) lie on the Extracellular side of the membrane. A helical transmembrane segment spans residues 161–179 (VKALRAFRVLRPLRLVSGV). Over 180–196 (PSLQVVLNSIFKAMLPL) the chain is Cytoplasmic. Residues 197-218 (FHIALLVLFMVIIYAIIGLELF) form a helical membrane-spanning segment. The Extracellular segment spans residues 219-279 (KGKMHKTCYY…HGITHFDNFG (61 aa)). Disulfide bonds link Cys226/Cys254 and Cys245/Cys261. Asn257 carries N-linked (GlcNAc...) asparagine glycosylation. Residues 280 to 301 (FSMLTVYQCITMEGWTDVLYWV) constitute an intramembrane region (pore-forming). A Selectivity filter of repeat I motif is present at residues 290–293 (TMEG). Glu292 is a Ca(2+) binding site. Residues 302–309 (NDAIGNEW) lie on the Extracellular side of the membrane. The chain crosses the membrane as a helical span at residues 310-330 (PWIYFVTLILLGSFFILNLVL). Over 331-432 (GVLSGEFTKE…WKCHDLVKSR (102 aa)) the chain is Cytoplasmic. Residues 357 to 374 (QQLEEDLRGYMSWITQGE) form a binding to the beta subunit region. 2 positions are modified to phosphoserine: Ser393 and Ser397. Residues 418–664 (NRVFRWKCHD…VFLAIAVDNL (247 aa)) form an II repeat. Residues 433 to 451 (VFYWLVILIVALNTLSIAS) form a helical membrane-spanning segment. Residues 452-462 (EHHNQPLWLTH) are Extracellular-facing. A helical membrane pass occupies residues 463-483 (LQDIANRVLLSLFTIEMLLKM). The Cytoplasmic portion of the chain corresponds to 484–494 (YGLGLRQYFMS). The helical transmembrane segment at 495–514 (IFNRFDCFVVCSGILELLLV) threads the bilayer. Over 515–523 (ESGAMTPLG) the chain is Extracellular. Residues 524–542 (ISVLRCIRLLRLFKITKYW) form a helical membrane-spanning segment. Residues 543-561 (TSLSNLVASLLNSIRSIAS) are Cytoplasmic-facing. The chain crosses the membrane as a helical span at residues 562–581 (LLLLLFLFIIIFALLGMQLF). Residues 582-601 (GGRYDFEDTEVRRSNFDNFP) are Extracellular-facing. Positions 602 to 623 (QALISVFQVLTGEDWNSVMYNG) form an intramembrane region, pore-forming. Positions 612-615 (TGED) match the Selectivity filter of repeat II motif. Glu614 lines the Ca(2+) pocket. Residues 624-633 (IMAYGGPSYP) lie on the Extracellular side of the membrane. A helical transmembrane segment spans residues 634-653 (GVLVCIYFIILFVCGNYILL). The Cytoplasmic segment spans residues 654-799 (NVFLAIAVDN…VLCHRIVNAT (146 aa)). Disordered regions lie at residues 673 to 717 (AQKA…IPTT) and 731 to 757 (EVKD…VSPR). Ser687 carries the post-translational modification Phosphoserine; by PKA. Residues 690–711 (LPDKTEEEKSVMAKKLEQKPKG) are compositionally biased toward basic and acidic residues. Acidic residues predominate over residues 742 to 751 (PGDDEEDEPE). The interaction with STAC, STAC2 and STAC3 (via SH3 domains) stretch occupies residues 747–760 (EDEPEIPVSPRPRP). Residues 786-1068 (NKVRVLCHRI…IFVGFVIVTF (283 aa)) form an III repeat. A helical membrane pass occupies residues 800–818 (WFTNFILLFILLSSAALAA). At 819 to 830 (EDPIRAESVRNQ) the chain is on the extracellular side. A helical transmembrane segment spans residues 831-850 (ILGYFDIAFTSVFTVEIVLK). The Cytoplasmic portion of the chain corresponds to 851–866 (MTTYGAFLHKGSFCRN). The chain crosses the membrane as a helical span at residues 867–885 (YFNILDLLVVAVSLISMGL). Over 886–892 (ESSTISV) the chain is Extracellular. Residues 893 to 911 (VKILRVLRVLRPLRAINRA) form a helical membrane-spanning segment. Over 912–930 (KGLKHVVQCVFVAIRTIGN) the chain is Cytoplasmic. A helical transmembrane segment spans residues 931–950 (IVLVTTLLQFMFACIGVQLF). Topologically, residues 951 to 1000 (KGKFFSCNDLSKMTEEECRGYYYVYKDGDPTQMELRPRQWIHNDFHFDNV) are extracellular. A disulfide bond links Cys957 and Cys968. The segment at 988–1077 (RQWIHNDFHF…FQEQGETEYK (90 aa)) is dihydropyridine binding. An intramembrane region (pore-forming) is located at residues 1001–1021 (LSAMMSLFTVSTFEGWPQLLY). Residues 1012 to 1015 (TFEG) carry the Selectivity filter of repeat III motif. Glu1014 provides a ligand contact to Ca(2+). Residues 1022 to 1038 (RAIDSNEEDMGPVYNNR) lie on the Extracellular side of the membrane. The helical transmembrane segment at 1039–1060 (VEMAIFFIIYIILIAFFMMNIF) threads the bilayer. The Cytoplasmic segment spans residues 1061–1118 (VGFVIVTFQEQGETEYKNCELDKNQRQCVQYALKARPLRCYIPKNPYQYQVWYVVTSS). The stretch at 1105–1384 (NPYQYQVWYV…LFVAVIMDNF (280 aa)) is one IV repeat. The chain crosses the membrane as a helical span at residues 1119-1140 (YFEYLMFALIMLNTICLGMQHY). The Extracellular segment spans residues 1141–1148 (HQSEEMNH). A helical membrane pass occupies residues 1149-1170 (ISDILNVAFTIIFTLEMILKLL). The Cytoplasmic segment spans residues 1171–1180 (AFKARGYFGD). Residues 1181-1200 (PWNVFDFLIVIGSIIDVILS) form a helical membrane-spanning segment. At 1201–1231 (EIDTFLASSGGLYCLGGGCGNVDPDESARIS) the chain is on the extracellular side. The helical transmembrane segment at 1232–1250 (SAFFRLFRVMRLIKLLSRA) threads the bilayer. At 1251-1268 (EGVRTLLWTFIKSFQALP) the chain is on the cytoplasmic side. The chain crosses the membrane as a helical span at residues 1269-1289 (YVALLIVMLFFIYAVIGMQMF). The Extracellular segment spans residues 1290-1311 (GKIALVDGTQINRNNNFQTFPQ). The pore-forming intramembrane region spans 1312–1330 (AVLLLFRCATGEAWQEILL). The Selectivity filter of repeat IV signature appears at 1321–1324 (TGEA). Topologically, residues 1331-1356 (ACSYGKLCDPESDYAPGEEYTCGTNF) are extracellular. Residues 1337 to 1403 (LCDPESDYAP…LGPHHLDEFK (67 aa)) are dihydropyridine binding. A disulfide bond links Cys1338 and Cys1352. The phenylalkylamine binding stretch occupies residues 1349–1391 (EYTCGTNFAYYYFISFYMLCAFLIINLFVAVIMDNFDYLTRDW). The helical transmembrane segment at 1357–1381 (AYYYFISFYMLCAFLIINLFVAVIM) threads the bilayer. At 1382-1873 (DNFDYLTRDW…SQETLIPPRP (492 aa)) the chain is on the cytoplasmic side. An interaction with calmodulin region spans residues 1522–1542 (KFYATFLIQEHFRKFMKRQEE). At Ser1575 the chain carries Phosphoserine; by PKA and CAMK2. Phosphothreonine; by CK2 is present on Thr1579. Ser1617 is subject to Phosphoserine; by PKA. Disordered stretches follow at residues 1689 to 1782 (EFPG…RPAP) and 1841 to 1873 (GMAS…PPRP). Residues 1847 to 1858 (GSLSRRSSLGSL) are compositionally biased toward low complexity.

The protein belongs to the calcium channel alpha-1 subunit (TC 1.A.1.11) family. CACNA1S subfamily. As to quaternary structure, component of a calcium channel complex consisting of a pore-forming alpha subunit (CACNA1S) and the ancillary subunits CACNB1 or CACNB2, CACNG1 and CACNA2D1. The channel complex contains alpha, beta, gamma and delta subunits in a 1:1:1:1 ratio, i.e. it contains either CACNB1 or CACNB2. CACNA1S channel activity is modulated by the auxiliary subunits (CACNB1 or CACNB2, CACNG1 and CACNA2D1). Interacts with DYSF and JSRP1. Interacts with RYR1. Interacts with STAC, STAC2 and STAC3 (via their SH3 domains). Interaction with STAC3 promotes expression at the cell membrane. Interaction with STAC2 promotes expression at the cell membrane, but with much lower efficiency than STAC3. Interaction with STAC1 leads to very low levels expression at the cell membrane, much less than the levels observed upon interaction with STAC3 and STAC2. Interacts with CALM. The alpha-1S subunit is found in two isoforms in the skeletal muscle: a minor form of 212 kDa containing the complete amino acid sequence, and a major form of 190 kDa derived from the full-length form by post-translational proteolysis close to Phe-1690. Post-translationally, phosphorylated. Phosphorylation by PKA activates the calcium channel. Both the minor and major forms are phosphorylated in vitro by PKA. Phosphorylation at Ser-1575 is involved in beta-adrenergic-mediated regulation of the channel. As to expression, detected in skeletal muscle T-tubules (at protein level).

Its subcellular location is the cell membrane. The protein localises to the sarcolemma. It localises to the T-tubule. The enzyme catalyses Ca(2+)(in) = Ca(2+)(out). Its activity is regulated as follows. Channel activity is blocked by dihydropyridines (DHP), phenylalkylamines, and by benzothiazepines. In terms of biological role, pore-forming, alpha-1S subunit of the voltage-gated calcium channel that gives rise to L-type calcium currents in skeletal muscle. Calcium channels containing the alpha-1S subunit play an important role in excitation-contraction coupling in skeletal muscle via their interaction with RYR1, which triggers Ca(2+) release from the sarcplasmic reticulum and ultimately results in muscle contraction. Long-lasting (L-type) calcium channels belong to the 'high-voltage activated' (HVA) group. The polypeptide is Voltage-dependent L-type calcium channel subunit alpha-1S (CACNA1S) (Oryctolagus cuniculus (Rabbit)).